The chain runs to 301 residues: Protein p34 (301 aa).

Transmembrane regions (helical) follow at residues 15–35, 40–60, 83–103, 120–140, and 171–191; these read YLSVTTALIILSIKLYAWVVT, ILAALIDSMLDITSSFINLIA, TIFSQSIFFFASAFFVGFSSV, TVMYVCIFLTIILVFYQTYVI, and LSDYFWFVDPLFGVVISLYIF.

Belongs to the cation diffusion facilitator (CDF) transporter (TC 2.A.4) family.

It is found in the cell membrane. In Rickettsia rickettsii (strain Sheila Smith), this protein is Protein p34 (p34).